A 417-amino-acid polypeptide reads, in one-letter code: Serine protease hepsin (417 aa).

Residues 1–23 (MAQKEGGRTVPCCSRPKVAALTA) lie on the Cytoplasmic side of the membrane. The helical; Signal-anchor for type II membrane protein transmembrane segment at 24-44 (GTLLLLTAIGAASWAIVAVLL) threads the bilayer. Residues 45-417 (RSDQEPLYPV…SEASGMVTQL (373 aa)) are Extracellular-facing. In terms of domain architecture, SRCR spans 54 to 151 (VQVSSADARL…RGRFLAAICQ (98 aa)). 8 disulfide bridges follow: Cys-77–Cys-140, Cys-90–Cys-150, Cys-119–Cys-138, Cys-153–Cys-277, Cys-188–Cys-204, Cys-291–Cys-359, Cys-322–Cys-338, and Cys-349–Cys-381. Asn-112 carries N-linked (GlcNAc...) asparagine glycosylation. The Peptidase S1 domain occupies 163–405 (IVGGRDTSLG…FREWIFQAIK (243 aa)). Active-site charge relay system residues include His-203 and Asp-257. The active-site Charge relay system is Ser-353.

The protein belongs to the peptidase S1 family. In terms of tissue distribution, detected in liver and kidney.

It is found in the cell membrane. It localises to the apical cell membrane. It carries out the reaction Cleavage after basic amino-acid residues, with Arg strongly preferred to Lys.. Serine protease that cleaves extracellular substrates, and contributes to the proteolytic processing of growth factors, such as HGF and MST1/HGFL. Plays a role in cell growth and maintenance of cell morphology. Plays a role in the proteolytic processing of ACE2. Mediates the proteolytic cleavage of urinary UMOD that is required for UMOD polymerization. The polypeptide is Serine protease hepsin (HPN) (Homo sapiens (Human)).